The chain runs to 313 residues: 4-hydroxy-3-methylbut-2-enyl diphosphate reductase (313 aa).

Position 12 (Cys-12) interacts with [4Fe-4S] cluster. (2E)-4-hydroxy-3-methylbut-2-enyl diphosphate contacts are provided by His-41 and His-74. Dimethylallyl diphosphate contacts are provided by His-41 and His-74. Residues His-41 and His-74 each coordinate isopentenyl diphosphate. Cys-96 is a [4Fe-4S] cluster binding site. His-124 serves as a coordination point for (2E)-4-hydroxy-3-methylbut-2-enyl diphosphate. A dimethylallyl diphosphate-binding site is contributed by His-124. His-124 is a binding site for isopentenyl diphosphate. The active-site Proton donor is the Glu-126. Thr-167 provides a ligand contact to (2E)-4-hydroxy-3-methylbut-2-enyl diphosphate. [4Fe-4S] cluster is bound at residue Cys-197. Residues Ser-225, Ser-226, Asn-227, and Ser-269 each coordinate (2E)-4-hydroxy-3-methylbut-2-enyl diphosphate. Dimethylallyl diphosphate-binding residues include Ser-225, Ser-226, Asn-227, and Ser-269. Residues Ser-225, Ser-226, Asn-227, and Ser-269 each coordinate isopentenyl diphosphate.

The protein belongs to the IspH family. [4Fe-4S] cluster serves as cofactor.

It carries out the reaction isopentenyl diphosphate + 2 oxidized [2Fe-2S]-[ferredoxin] + H2O = (2E)-4-hydroxy-3-methylbut-2-enyl diphosphate + 2 reduced [2Fe-2S]-[ferredoxin] + 2 H(+). It catalyses the reaction dimethylallyl diphosphate + 2 oxidized [2Fe-2S]-[ferredoxin] + H2O = (2E)-4-hydroxy-3-methylbut-2-enyl diphosphate + 2 reduced [2Fe-2S]-[ferredoxin] + 2 H(+). It functions in the pathway isoprenoid biosynthesis; dimethylallyl diphosphate biosynthesis; dimethylallyl diphosphate from (2E)-4-hydroxy-3-methylbutenyl diphosphate: step 1/1. It participates in isoprenoid biosynthesis; isopentenyl diphosphate biosynthesis via DXP pathway; isopentenyl diphosphate from 1-deoxy-D-xylulose 5-phosphate: step 6/6. In terms of biological role, catalyzes the conversion of 1-hydroxy-2-methyl-2-(E)-butenyl 4-diphosphate (HMBPP) into a mixture of isopentenyl diphosphate (IPP) and dimethylallyl diphosphate (DMAPP). Acts in the terminal step of the DOXP/MEP pathway for isoprenoid precursor biosynthesis. The protein is 4-hydroxy-3-methylbut-2-enyl diphosphate reductase of Baumannia cicadellinicola subsp. Homalodisca coagulata.